Here is a 681-residue protein sequence, read N- to C-terminus: PTS system glucose-specific EIICBA component (681 aa).

Positions 3 to 414 (KKLFGQLQRI…LKYKTPGRED (412 aa)) constitute a PTS EIIC type-1 domain. 10 consecutive transmembrane segments (helical) span residues 16 to 36 (LMLP…GTAI), 73 to 93 (MIFA…AAIA), 126 to 146 (ILGI…GALA), 170 to 190 (FVPI…ALIW), 199 to 219 (AFST…FGFI), 273 to 293 (FMQG…LAIY), 303 to 323 (VVAG…ITEP), 328 to 348 (FLFV…LSFL), 355 to 375 (VHLG…GVLP), and 383 to 403 (VIPV…FLIV). Residues 425-506 (TELPYAVLEA…QQIMNGQVVE (82 aa)) enclose the PTS EIIB type-1 domain. C447 serves as the catalytic Phosphocysteine intermediate; for EIIB activity. Residues 551-655 (DQVFSEKMMG…SDITPIIVTQ (105 aa)) form the PTS EIIA type-1 domain. The Tele-phosphohistidine intermediate; for EIIA activity role is filled by H603.

The protein localises to the cell membrane. It catalyses the reaction N(pros)-phospho-L-histidyl-[protein] + D-glucose(out) = D-glucose 6-phosphate(in) + L-histidyl-[protein]. Functionally, the phosphoenolpyruvate-dependent sugar phosphotransferase system (sugar PTS), a major carbohydrate active transport system, catalyzes the phosphorylation of incoming sugar substrates concomitantly with their translocation across the cell membrane. This system is involved in glucose transport. The protein is PTS system glucose-specific EIICBA component (ptsG) of Staphylococcus aureus (strain JH9).